Consider the following 412-residue polypeptide: 1-deoxy-D-xylulose 5-phosphate reductoisomerase (412 aa).

Residues T10, G11, S12, I13, G36, K37, N38, and N130 each contribute to the NADPH site. K131 contributes to the 1-deoxy-D-xylulose 5-phosphate binding site. Position 132 (E132) interacts with NADPH. Mn(2+) is bound at residue D156. The 1-deoxy-D-xylulose 5-phosphate site is built by S157, E158, S194, and H217. E158 contacts Mn(2+). G223 is a binding site for NADPH. 1-deoxy-D-xylulose 5-phosphate is bound by residues S230, N235, K236, and E239. E239 serves as a coordination point for Mn(2+).

It belongs to the DXR family. Mg(2+) serves as cofactor. The cofactor is Mn(2+).

It carries out the reaction 2-C-methyl-D-erythritol 4-phosphate + NADP(+) = 1-deoxy-D-xylulose 5-phosphate + NADPH + H(+). The protein operates within isoprenoid biosynthesis; isopentenyl diphosphate biosynthesis via DXP pathway; isopentenyl diphosphate from 1-deoxy-D-xylulose 5-phosphate: step 1/6. Functionally, catalyzes the NADPH-dependent rearrangement and reduction of 1-deoxy-D-xylulose-5-phosphate (DXP) to 2-C-methyl-D-erythritol 4-phosphate (MEP). The sequence is that of 1-deoxy-D-xylulose 5-phosphate reductoisomerase from Prochlorococcus marinus (strain NATL1A).